The sequence spans 415 residues: All trans-polyprenyl-diphosphate synthase PDSS1 (415 aa).

The segment at 16-35 is disordered; sequence PAARSPGPGSPGRAGPLGPS. Isopentenyl diphosphate is bound by residues Lys134, Arg137, and His173. Mg(2+) contacts are provided by Asp180 and Asp184. Residue Arg190 participates in isopentenyl diphosphate binding.

It belongs to the FPP/GGPP synthase family. In terms of assembly, heterotetramer composed of 2 PDSS1/DPS1 and 2 PDSS2/DLP1 subunits. It depends on Mg(2+) as a cofactor.

The protein localises to the mitochondrion. The catalysed reaction is 7 isopentenyl diphosphate + (2E,6E)-farnesyl diphosphate = all-trans-decaprenyl diphosphate + 7 diphosphate. The enzyme catalyses 6 isopentenyl diphosphate + (2E,6E)-farnesyl diphosphate = all-trans-nonaprenyl diphosphate + 6 diphosphate. It functions in the pathway cofactor biosynthesis; ubiquinone biosynthesis. Its function is as follows. Heterotetrameric enzyme that catalyzes the condensation of farnesyl diphosphate (FPP), which acts as a primer, and isopentenyl diphosphate (IPP) to produce prenyl diphosphates of varying chain lengths and participates in the determination of the side chain of ubiquinone. Supplies nona and decaprenyl diphosphate, the precursors for the side chain of the isoprenoid quinones ubiquinone-9 (Q9)and ubiquinone-10 (Q10) respectively. The enzyme adds isopentenyl diphosphate molecules sequentially to farnesyl diphosphate with trans stereochemistry. The polypeptide is All trans-polyprenyl-diphosphate synthase PDSS1 (Homo sapiens (Human)).